The sequence spans 103 residues: Large ribosomal subunit protein uL24 (103 aa).

The protein belongs to the universal ribosomal protein uL24 family. In terms of assembly, part of the 50S ribosomal subunit.

Functionally, one of two assembly initiator proteins, it binds directly to the 5'-end of the 23S rRNA, where it nucleates assembly of the 50S subunit. One of the proteins that surrounds the polypeptide exit tunnel on the outside of the subunit. This chain is Large ribosomal subunit protein uL24, found in Listeria monocytogenes serotype 4a (strain HCC23).